Consider the following 1235-residue polypeptide: MSHEELTALAPVGPAAFLYFSRLNAETQEILATLSLCDRSSSVVIAPLLAGLTVEADFGVSVRTPVLCYDGGVLTKVTSFCPFALYFHHTQGIVAFTEDHGDVHRLCEDARQKYALEAYMPEADRVPTDLAALCAAVGCQASETTVHVVVGNGLKEFLFAGQLIPCVEEATTVRLHGGEAVRVPLYPPTLFNSLQLDAEADEVSLDARSAFVEARGLYVPAVSETLFYYVYTSWCQSLRFSEPRVLIEAALRQFVHDSQQSVKLAPHKRYLGYMSQRLSSLEKDHLMLSDAVVCELAFSFASVFFDSAYQPAESMLFSEWPLVTNATDHRDLIRALTELKLHLSTHVAALVFSANSVLYQHRLVYLQSSARHPSAGGTASQETLLKAIQFTNGLSAACEDVYNDARKVLKFQGAPLKDERYGPQHLALVCGTCPQLVSGFVWYLNRVSVYNTGLSGSSTLTNHLVGCAAGLCEACGGTCCHTCYQTAFVRVRTRLPVVPKQPKKEPCVITVQSRFLNDVDILGSFGRRYNVDAKDGGLDGKGDDGVPGGGAGGGGGRDVSGGPSDGLGGGRGGGGGGDSGGMMGRGGRMLGASVDRTYRLNRILDYCRKMRLIDPVTGEDTFSAHGKSDFVAVFSALNKFVDDEALGFVSEVRLKSSRDEVAGATQAFNLDLNPYAVAFQPLLAYAYFRSVFYVIQNVALITATSYIVDNPLTTNLVSKWMTQHFQSIHGAFSTTSSRKGFLFTKQIKSSKNSDHDRLLDFRLYAQGTYAVVPMEIKLSRLSVPTLIMVRVKNRPIYRAGKGNAGSVFFRRDHVPRRNPAKGCLGFLLYRHHERLFPECGLPCLQFWQKVCSNALPKNVPIGDMGEFNAFVKFLVAVTADYQEHDLLDVAPDCVLSYVESRFHNKFLCYYGFKDYIGSLHGLTTRLTTQNHAQFPHVLGASPRFSSPAEFALHVKGLKTAGVPAPMAATVARESLVRSVFEHRSLVTVPVSVEKYAGINNSKEIYQFGQIGYFSGNGVERSLNVSSMSGQDYRFMRQRYLLATRLADVLIKRSRRENVLFDADLIKNRVMLALDAENLDCDPEVMAVYEILSVREEIPASDDVLFFVDGCEALAASLMDKFAALQEQGVEDFSLENLRRVLDADAQRLTDAAGGEVHDLSALFAPSGVGAASGVGGGGLLLGESVAGNSICFGVPGETGGGCFLVNAGEDEAGGVGGSSGGGGGSGLLPAKRSRL.

The interval 536-584 (GGLDGKGDDGVPGGGAGGGGGRDVSGGPSDGLGGGRGGGGGGDSGGMMG) is disordered. A compositionally biased stretch (gly residues) spans 545–584 (GVPGGGAGGGGGRDVSGGPSDGLGGGRGGGGGGDSGGMMG). The Required for filament formation signature appears at 846 to 847 (FW). Residues 1214–1226 (GVGGSSGGGGGSG) show a composition bias toward gly residues. The segment at 1214 to 1235 (GVGGSSGGGGGSGLLPAKRSRL) is disordered. Residues 1232–1235 (RSRL) are required for nuclear localization.

Belongs to the herpesviridae major DNA-binding protein family. In terms of assembly, homooligomers. Forms double-helical filaments necessary for the formation of replication compartments within the host nucleus. Interacts with the origin-binding protein. Interacts with the helicase primase complex; this interaction stimulates primer synthesis activity of the helicase-primase complex. Interacts with the DNA polymerase. Interacts with the alkaline exonuclease; this interaction increases its nuclease processivity.

The protein localises to the host nucleus. Plays several crucial roles in viral infection. Participates in the opening of the viral DNA origin to initiate replication by interacting with the origin-binding protein. May disrupt loops, hairpins and other secondary structures present on ssDNA to reduce and eliminate pausing of viral DNA polymerase at specific sites during elongation. Promotes viral DNA recombination by performing strand-transfer, characterized by the ability to transfer a DNA strand from a linear duplex to a complementary single-stranded DNA circle. Can also catalyze the renaturation of complementary single strands. Additionally, reorganizes the host cell nucleus, leading to the formation of prereplicative sites and replication compartments. This process is driven by the protein which can form double-helical filaments in the absence of DNA. This is Major DNA-binding protein from Homo sapiens (Human).